We begin with the raw amino-acid sequence, 270 residues long: Glucosamine-6-phosphate deaminase (270 aa).

The Proton acceptor; for enolization step role is filled by D72. Residue D141 is the For ring-opening step of the active site. H143 serves as the catalytic Proton acceptor; for ring-opening step. The active-site For ring-opening step is the E148.

This sequence belongs to the glucosamine/galactosamine-6-phosphate isomerase family. NagB subfamily. As to quaternary structure, homohexamer.

It catalyses the reaction alpha-D-glucosamine 6-phosphate + H2O = beta-D-fructose 6-phosphate + NH4(+). It functions in the pathway amino-sugar metabolism; N-acetylneuraminate degradation; D-fructose 6-phosphate from N-acetylneuraminate: step 5/5. With respect to regulation, allosterically activated by N-acetylglucosamine 6-phosphate (GlcNAc6P). Functionally, catalyzes the reversible isomerization-deamination of glucosamine 6-phosphate (GlcN6P) to form fructose 6-phosphate (Fru6P) and ammonium ion. This is Glucosamine-6-phosphate deaminase from Photorhabdus laumondii subsp. laumondii (strain DSM 15139 / CIP 105565 / TT01) (Photorhabdus luminescens subsp. laumondii).